The sequence spans 339 residues: MAKIAVLGNGSWGSVLGSMLADNGNDVVLYGNIDSVNQEINEHHTNTHYMKNWKLNPNVPATGDLEKALDGAEIILFVLPTKAVRIVAKNARKILDKTGATPLLVTATKGIEPGSKKLISDILTEEVYPNDSEKIVAISGPSHAENVAQKDLTAIACASTSEENAKRVQKIFSNNYVRFYTNDDLVGVEVGGAVKNVIAIAAGILVGKGYGDDAKAALMTRGLAEITRLGVKYFGAKPMTFSGLSGIGDLIVTATSQNSRNWRAGKQIGEGKSLDYVLDHMGQVVEGATTVKAVHELAEEKNIDMPISEAIYRVLYENADVDQEIKTMMGRNPKPEIQL.

NADPH is bound by residues Ser-11, Trp-12, and Lys-109. Positions 109, 140, and 142 each coordinate sn-glycerol 3-phosphate. Ala-144 provides a ligand contact to NADPH. Sn-glycerol 3-phosphate-binding residues include Lys-195, Asp-249, Ser-259, Arg-260, and Asn-261. The Proton acceptor role is filled by Lys-195. Arg-260 serves as a coordination point for NADPH. Residues Val-284 and Glu-286 each contribute to the NADPH site.

Belongs to the NAD-dependent glycerol-3-phosphate dehydrogenase family.

It localises to the cytoplasm. The catalysed reaction is sn-glycerol 3-phosphate + NAD(+) = dihydroxyacetone phosphate + NADH + H(+). It catalyses the reaction sn-glycerol 3-phosphate + NADP(+) = dihydroxyacetone phosphate + NADPH + H(+). The protein operates within membrane lipid metabolism; glycerophospholipid metabolism. In terms of biological role, catalyzes the reduction of the glycolytic intermediate dihydroxyacetone phosphate (DHAP) to sn-glycerol 3-phosphate (G3P), the key precursor for phospholipid synthesis. The chain is Glycerol-3-phosphate dehydrogenase [NAD(P)+] from Lactobacillus johnsonii (strain CNCM I-12250 / La1 / NCC 533).